A 215-amino-acid chain; its full sequence is Thymidylate kinase (215 aa).

11-18 (GIDGAGKS) contributes to the ATP binding site.

This sequence belongs to the thymidylate kinase family.

The catalysed reaction is dTMP + ATP = dTDP + ADP. Its function is as follows. Phosphorylation of dTMP to form dTDP in both de novo and salvage pathways of dTTP synthesis. The sequence is that of Thymidylate kinase from Nitrosomonas europaea (strain ATCC 19718 / CIP 103999 / KCTC 2705 / NBRC 14298).